The sequence spans 534 residues: Zinc finger protein 671 (534 aa).

One can recognise a KRAB domain in the interval 49–120 (VVFEDVFVYF…DQVDMTSATE (72 aa)). A C2H2-type 1; degenerate zinc finger spans residues 192 to 214 (YLCGACGKQFWFSTDFDQHQNQP). 9 C2H2-type zinc fingers span residues 285–307 (HRCGECGKAFTRKDTLARHQRIH), 313–335 (YECNECGKFFSQSYDLFKHQTVH), 341–363 (YECSECGKFFRQISGLIEHRRVH), 369–391 (YQCGKCGKFFSSKSNLIRHQEVH), 397–419 (YVCSECGKEFSRKHTLVLHQRTH), 425–447 (YECSECGKAFSQSSHLNVHWRIH), 451–473 (YECSRCGKAFSCISKLIQHQKVH), 479–501 (YECSKCGKAFTQRPNLIRHWKVH), and 507–529 (YVCSECGREFIRKQTLVLHQRVH).

The protein belongs to the krueppel C2H2-type zinc-finger protein family.

It localises to the nucleus. In terms of biological role, may be involved in transcriptional regulation. The sequence is that of Zinc finger protein 671 (ZNF671) from Homo sapiens (Human).